We begin with the raw amino-acid sequence, 332 residues long: Methionine import ATP-binding protein MetN (332 aa).

The ABC transporter domain maps to 2 to 241 (IELKGLTKVF…PGSRLRELFY (240 aa)). An ATP-binding site is contributed by 38 to 45 (GQSGAGKS).

It belongs to the ABC transporter superfamily. Methionine importer (TC 3.A.1.24) family. The complex is composed of two ATP-binding proteins (MetN), two transmembrane proteins (MetI) and a solute-binding protein (MetQ).

Its subcellular location is the cell membrane. It carries out the reaction L-methionine(out) + ATP + H2O = L-methionine(in) + ADP + phosphate + H(+). It catalyses the reaction D-methionine(out) + ATP + H2O = D-methionine(in) + ADP + phosphate + H(+). Part of the ABC transporter complex MetNIQ involved in methionine import. Responsible for energy coupling to the transport system. The chain is Methionine import ATP-binding protein MetN from Symbiobacterium thermophilum (strain DSM 24528 / JCM 14929 / IAM 14863 / T).